Reading from the N-terminus, the 67-residue chain is Conotoxin TsMMSK-011 (67 aa).

The first 22 residues, 1 to 22 (MMSKLGVLLTICLLLFPLTVLP), serve as a signal peptide directing secretion. Positions 23 to 50 (MDGDQPADLPALRTQDIATDQSPWFDPV) are excised as a propeptide. 3 cysteine pairs are disulfide-bonded: Cys-53-Cys-65, Cys-54-Cys-61, and Cys-58-Cys-64. Pro-63 carries the post-translational modification 4-hydroxyproline.

Belongs to the conotoxin M superfamily. As to expression, expressed by the venom duct.

The protein localises to the secreted. The chain is Conotoxin TsMMSK-011 from Conus tessulatus (Tessellate cone).